Here is a 302-residue protein sequence, read N- to C-terminus: tRNA dimethylallyltransferase (302 aa).

21–28 provides a ligand contact to ATP; the sequence is GPTASGKS. A substrate-binding site is contributed by 23-28; the sequence is TASGKS.

It belongs to the IPP transferase family. In terms of assembly, monomer. Mg(2+) is required as a cofactor.

It catalyses the reaction adenosine(37) in tRNA + dimethylallyl diphosphate = N(6)-dimethylallyladenosine(37) in tRNA + diphosphate. Its function is as follows. Catalyzes the transfer of a dimethylallyl group onto the adenine at position 37 in tRNAs that read codons beginning with uridine, leading to the formation of N6-(dimethylallyl)adenosine (i(6)A). The polypeptide is tRNA dimethylallyltransferase (Paracoccus denitrificans (strain Pd 1222)).